Here is a 330-residue protein sequence, read N- to C-terminus: Protein C10 (330 aa).

This sequence belongs to the poxviridae C4/C10 protein family.

The polypeptide is Protein C10 (Homo sapiens (Human)).